Reading from the N-terminus, the 193-residue chain is Coiled-coil domain-containing protein 184 (193 aa).

A coiled-coil region spans residues 39–68; sequence GMKELMEHLKAQLQALFEDVRAMRGALDEQ. The interval 101–176 is disordered; the sequence is GLGVAGGKGS…LGENGPLVEP (76 aa). Positions 135 to 146 are enriched in acidic residues; it reads PDEEDEEEEEEK.

The chain is Coiled-coil domain-containing protein 184 (Ccdc184) from Rattus norvegicus (Rat).